The chain runs to 580 residues: Micronemal protein 4 (580 aa).

A signal peptide spans 1-25 (MRASLPVHLVVCTQLSAVWFGVAKA). Apple domains lie at 68–137 (CVHS…SRSC), 141–214 (CFEQ…KQFC), 232–301 (CIQL…PKSC), 305–375 (CFSN…VTVG), 419–488 (CVHT…SRTC), and 492–565 (CLRR…YTFC). 15 disulfides stabilise this stretch: cysteine 68/cysteine 137, cysteine 93/cysteine 115, cysteine 97/cysteine 103, cysteine 141/cysteine 214, cysteine 166/cysteine 188, cysteine 170/cysteine 176, cysteine 232/cysteine 301, cysteine 257/cysteine 279, cysteine 261/cysteine 267, cysteine 305/cysteine 380, cysteine 332/cysteine 354, cysteine 336/cysteine 342, cysteine 419/cysteine 488, cysteine 444/cysteine 466, and cysteine 448/cysteine 454.

Monomer. Part of the MIC6-MIC1-MIC4 complex. Interacts (via the second apple domain) directly with MIC1 (via the beta-finger region). Interacts with murine TLR2; the interaction promotes activation of bone marrow-derived dendritic cells and macrophages in the host. Interacts with murine TLR4; the interaction promotes activation of bone marrow-derived dendritic cells and macrophages in the host. Post-translationally, proteolytically cleaved at the N- and C-terminus after release from the microneme.

The protein localises to the cytoplasmic vesicle. It localises to the secretory vesicle. The protein resides in the microneme. Its subcellular location is the host early endosome. Lacto-N-biose inhibits binding to asialofetuin, a host glycoprotein. Its function is as follows. Soluble adhesin with carbohydrate-binding activity. Binds to galactose-terminating oligosaccharides. Required for attachment of the parasite to the host cell prior to invasion. Triggers the activation of murine bone marrow-derived dendritic cells and macrophages and production of pro-inflammatory cytokines, such as IL12 (IL12B/IL12A), in host TLR2/TLR4-dependent manner. Triggers the production of anti-inflammatory cytokine IL10 in murine bone marrow-derived macrophages in host TLR4-dependent manner. Induces transient endotoxin tolerance in murine bone marrow-derived macrophages, manifested by reduced TNF-alpha (TNF) production in response to challenge with lipopolysaccharides (LPS). The chain is Micronemal protein 4 from Toxoplasma gondii.